The primary structure comprises 522 residues: MYIIESARQRPPKRKYLSSGRKSVFQKLYDLYIEECEKEPEVKKLRRNVNLLEKLVMQETLSCLVVNLYPGNEGYSLMLRGKNGSDSETIRLPYEEGELLEYLDAEELPPILVDLLEKSQVNIFHCGCVIAEIRDYRQSSNMKSPGYQSRHILLRPTMQTLICDVHSITSDNHKWTQEDKLLLESQLILATAEPLCLDPSIAVTCTANRLLYNKQKMNTRPMKRCFKRYSRSSLNRQQDLSHCPPPPQLRLLDFLQKRKERKAGQHYDLKISKAGNCVDMWKRSPCNLAIPSEVDVEKYAKVEKSIKSDDSQPTVWPAHDVKDDYVFECEASTQYQKTKLTILQSLGDPLYYGKIQPCKADEESDSQMSPSHSSTDDHSNWFIIGSKTDAERVVNQYQELVQNEAKCPVKMSHSSSGSASLSQVSPGKETEQTETVSVQSSVLGKGVKHRPPPIKLPSSSGNSSSGNYFSPQQTSSFLKSPTPPPSSKPPTIPRKSSVDLNQVSMLSPAALSPASSSQRHES.

At Ser284 the chain carries Phosphoserine. 2 disordered regions span residues 361–380 and 408–522; these read DEES…DHSN and PVKM…RHES. Over residues 412 to 425 the composition is skewed to low complexity; it reads SHSSSGSASLSQVS. Polar residues predominate over residues 433–442; it reads TETVSVQSSV. The segment covering 458 to 467 has biased composition (low complexity); that stretch reads SSSGNSSSGN. Positions 481–492 are enriched in pro residues; it reads PTPPPSSKPPTI. Phosphothreonine is present on Thr482. The span at 506–522 shows a compositional bias: low complexity; it reads LSPAALSPASSSQRHES. Phosphoserine is present on residues Ser507 and Ser512.

The protein belongs to the SPT20 family. Interacts with ATG9A. Interacts with MAPK14.

Its function is as follows. Required for MAP kinase p38 (MAPK11, MAPK12, MAPK13 and/or MAPK14) activation during gastrulation. Required for down-regulation of E-cadherin during gastrulation by regulating E-cadherin protein level downstream from NCK-interacting kinase (NIK) and independently of the regulation of transcription by FGF signaling and Snail. Required for starvation-induced ATG9A trafficking during autophagy. The polypeptide is Transcription factor SPT20 homolog (SUPT20H) (Pongo abelii (Sumatran orangutan)).